The chain runs to 494 residues: tRNA (guanine(37)-N(1))-methyltransferase (494 aa).

The transit peptide at 1–32 directs the protein to the mitochondrion; it reads MRIRRILYFYGNLPNTYTANVLRRLAFSCWHT. S-adenosyl-L-methionine contacts are provided by residues His-278, 316–317, 344–345, and Asn-377; these read DL and DG. Residues 468–494 form a disordered region; sequence DTGEPESKRPRTAEAFPLPHVQQSRNS.

The protein belongs to the class I-like SAM-binding methyltransferase superfamily. TRM5/TYW2 family. In terms of assembly, monomer.

The protein localises to the mitochondrion matrix. It localises to the nucleus. It is found in the cytoplasm. It catalyses the reaction guanosine(37) in tRNA + S-adenosyl-L-methionine = N(1)-methylguanosine(37) in tRNA + S-adenosyl-L-homocysteine + H(+). Involved in mitochondrial tRNA methylation. Specifically methylates the N1 position of guanosine-37 in various tRNAs. Methylation is not dependent on the nature of the nucleoside 5' of the target nucleoside. This is the first step in the biosynthesis of wybutosine (yW), a modified base adjacent to the anticodon of tRNAs and required for accurate decoding. The polypeptide is tRNA (guanine(37)-N(1))-methyltransferase (trmt5) (Xenopus tropicalis (Western clawed frog)).